We begin with the raw amino-acid sequence, 486 residues long: Glycogen synthase (486 aa).

Lysine 20 serves as a coordination point for ADP-alpha-D-glucose.

The protein belongs to the glycosyltransferase 1 family. Bacterial/plant glycogen synthase subfamily.

The enzyme catalyses [(1-&gt;4)-alpha-D-glucosyl](n) + ADP-alpha-D-glucose = [(1-&gt;4)-alpha-D-glucosyl](n+1) + ADP + H(+). Its pathway is glycan biosynthesis; glycogen biosynthesis. Functionally, synthesizes alpha-1,4-glucan chains using ADP-glucose. The polypeptide is Glycogen synthase (Aeromonas hydrophila subsp. hydrophila (strain ATCC 7966 / DSM 30187 / BCRC 13018 / CCUG 14551 / JCM 1027 / KCTC 2358 / NCIMB 9240 / NCTC 8049)).